Reading from the N-terminus, the 189-residue chain is UPF0398 protein LGAS_1023 (189 aa).

It belongs to the UPF0398 family.

This chain is UPF0398 protein LGAS_1023, found in Lactobacillus gasseri (strain ATCC 33323 / DSM 20243 / BCRC 14619 / CIP 102991 / JCM 1131 / KCTC 3163 / NCIMB 11718 / NCTC 13722 / AM63).